Reading from the N-terminus, the 253-residue chain is 5-oxoprolinase subunit A (253 aa).

The protein belongs to the LamB/PxpA family. In terms of assembly, forms a complex composed of PxpA, PxpB and PxpC.

It catalyses the reaction 5-oxo-L-proline + ATP + 2 H2O = L-glutamate + ADP + phosphate + H(+). Catalyzes the cleavage of 5-oxoproline to form L-glutamate coupled to the hydrolysis of ATP to ADP and inorganic phosphate. This chain is 5-oxoprolinase subunit A, found in Bacillus cereus (strain AH187).